Reading from the N-terminus, the 198-residue chain is T-cell surface glycoprotein CD3 epsilon chain (198 aa).

An N-terminal signal peptide occupies residues 1–21; that stretch reads MQSGTRWRVLGLCLLSIGVWG. The Extracellular portion of the chain corresponds to 22-117; that stretch reads QDGNEEMGSI…RVCENCMEMD (96 aa). In terms of domain architecture, Ig-like spans 37-107; the sequence is QVSISGTTVI…DASHHLYLKA (71 aa). Cys-49 and Cys-89 form a disulfide bridge. A helical transmembrane segment spans residues 118 to 138; the sequence is VMAVATIVIVDICITLGLLLL. Residues 139 to 198 are Cytoplasmic-facing; sequence VYYWSKNRKAKAKPVTRGAGAGGRQRGQNKERPPPVPNPDYEPIRKGQQDLYSGLNQRRI. The disordered stretch occupies residues 152–198; it reads PVTRGAGAGGRQRGQNKERPPPVPNPDYEPIRKGQQDLYSGLNQRRI. Positions 166 to 183 are NUMB-binding region; it reads QNKERPPPVPNPDYEPIR. One can recognise an ITAM domain in the interval 169–196; that stretch reads ERPPPVPNPDYEPIRKGQQDLYSGLNQR. Residues 170 to 177 form a proline-rich sequence region; sequence RPPPVPNP. A phosphotyrosine mark is found at Tyr-179 and Tyr-190. The segment covering 188 to 198 has biased composition (polar residues); sequence DLYSGLNQRRI.

As to quaternary structure, the TCR-CD3 complex is composed of a CD3D/CD3E and a CD3G/CD3E heterodimers that preferentially associate with TCRalpha and TCRbeta, respectively, to form TCRalpha/CD3E/CD3G and TCRbeta/CD3G/CD3E trimers. In turn, the hexamer interacts with CD3Z homodimer to form the TCR-CD3 complex. Alternatively, TCRalpha and TCRbeta can be replaced by TCRgamma and TCRdelta. Interacts with CD6. Interacts (via Proline-rich sequence) with NCK1; the interaction is ligand dependent but independent of tyrosine kinase activation. Post-translationally, phosphorylated on Tyr residues after T-cell receptor triggering by LCK in association with CD4/CD8.

The protein localises to the cell membrane. Its function is as follows. Part of the TCR-CD3 complex present on T-lymphocyte cell surface that plays an essential role in adaptive immune response. When antigen presenting cells (APCs) activate T-cell receptor (TCR), TCR-mediated signals are transmitted across the cell membrane by the CD3 chains CD3D, CD3E, CD3G and CD3Z. All CD3 chains contain immunoreceptor tyrosine-based activation motifs (ITAMs) in their cytoplasmic domain. Upon TCR engagement, these motifs become phosphorylated by Src family protein tyrosine kinases LCK and FYN, resulting in the activation of downstream signaling pathways. In addition of this role of signal transduction in T-cell activation, CD3E plays an essential role in correct T-cell development. Also participates in internalization and cell surface down-regulation of TCR-CD3 complexes via endocytosis sequences present in CD3E cytosolic region. In addition to its role as a TCR coreceptor, it serves as a receptor for ITPRIPL1. Ligand recognition inhibits T-cell activation by promoting interaction with NCK1, which prevents CD3E-ZAP70 interaction and blocks the ERK-NFkB signaling cascade and calcium influx. The polypeptide is T-cell surface glycoprotein CD3 epsilon chain (CD3E) (Macaca fascicularis (Crab-eating macaque)).